A 114-amino-acid chain; its full sequence is Immunomodulatory protein FIP-Fve (114 aa).

At Ser-1 the chain carries N-acetylserine.

Belongs to the fungal immunomodulatory protein (FIP) family. In terms of assembly, homodimer.

Functionally, lectin with specificity for complex cell-surface carbohydrates. Possesses immunomodulatory activity, stimulates lymphocyte mitogenesis, suppresses systemic anaphylaxis reactions and edema, enhances transcription of IL-2, IFN-gamma and TNF-alpha and hemagglutinates red blood cells. This is Immunomodulatory protein FIP-Fve from Flammulina velutipes (Agaricus velutipes).